Here is a 195-residue protein sequence, read N- to C-terminus: Calcineurin B homologous protein 1 (195 aa).

Residue glycine 2 is the site of N-myristoyl glycine attachment. EF-hand domains are found at residues 26 to 61 (SQIT…AINP), 66 to 101 (IINA…KSKD), 110 to 145 (SRSN…MVGV), and 151 to 186 (QLGS…VDVE). Residues aspartate 123, aspartate 125, aspartate 127, lysine 129, glutamate 134, aspartate 164, aspartate 166, aspartate 168, and glutamate 175 each contribute to the Ca(2+) site.

This sequence belongs to the calcineurin regulatory subunit family. CHP subfamily. In terms of assembly, monomer. Post-translationally, phosphorylated. In terms of processing, calcium-binding or N-myristoylation are necessary for the Na(+)/H(+) exchange activities.

The protein localises to the nucleus. The protein resides in the cytoplasm. It is found in the cytoskeleton. It localises to the endomembrane system. Its subcellular location is the endoplasmic reticulum-Golgi intermediate compartment. The protein localises to the endoplasmic reticulum. The protein resides in the cell membrane. It is found in the membrane. Functionally, calcium-binding protein involved in different processes such as regulation of vesicular trafficking, plasma membrane Na(+)/H(+) exchanger and gene transcription. Involved in the constitutive exocytic membrane traffic. Mediates the association between microtubules and membrane-bound organelles of the endoplasmic reticulum and Golgi apparatus and is also required for the targeting and fusion of transcytotic vesicles (TCV) with the plasma membrane. Functions as an integral cofactor in cell pH regulation by controlling plasma membrane-type Na(+)/H(+) exchange activity. Inhibits serum- and GTPase-stimulated Na(+)/H(+) exchange. Plays a role as an inhibitor of ribosomal RNA transcription. Acts as a negative regulator of the calcineurin/NFAT signaling pathway. The polypeptide is Calcineurin B homologous protein 1 (CHP1) (Gallus gallus (Chicken)).